The following is a 244-amino-acid chain: tRNA pseudouridine synthase B (244 aa).

Aspartate 46 (nucleophile) is an active-site residue.

Belongs to the pseudouridine synthase TruB family. Type 1 subfamily.

The enzyme catalyses uridine(55) in tRNA = pseudouridine(55) in tRNA. In terms of biological role, responsible for synthesis of pseudouridine from uracil-55 in the psi GC loop of transfer RNAs. The polypeptide is tRNA pseudouridine synthase B (Bordetella bronchiseptica (strain ATCC BAA-588 / NCTC 13252 / RB50) (Alcaligenes bronchisepticus)).